A 140-amino-acid polypeptide reads, in one-letter code: L-fucose mutarotase (140 aa).

The Proton donor role is filled by H22. Substrate contacts are provided by residues D30, R107, and 129–131 (YGN).

It belongs to the RbsD / FucU family. FucU mutarotase subfamily. Homodecamer.

It localises to the cytoplasm. The catalysed reaction is alpha-L-fucose = beta-L-fucose. Its pathway is carbohydrate metabolism; L-fucose metabolism. Involved in the anomeric conversion of L-fucose. In Klebsiella pneumoniae (strain 342), this protein is L-fucose mutarotase.